The sequence spans 59 residues: Large ribosomal subunit protein bL32 (59 aa).

The disordered stretch occupies residues 35-59; it reads EAHLRHHISPNGYYRGRKVVKTKND. Residues 49-59 show a composition bias toward basic residues; it reads RGRKVVKTKND.

This sequence belongs to the bacterial ribosomal protein bL32 family.

The polypeptide is Large ribosomal subunit protein bL32 (Polynucleobacter asymbioticus (strain DSM 18221 / CIP 109841 / QLW-P1DMWA-1) (Polynucleobacter necessarius subsp. asymbioticus)).